A 293-amino-acid chain; its full sequence is N-acetylneuraminate lyase (293 aa).

The aceneuramate site is built by Ser-48 and Ser-49. The active-site Proton donor is the Tyr-137. Lys-165 serves as the catalytic Schiff-base intermediate with substrate. The aceneuramate site is built by Thr-167, Gly-189, Asp-191, Glu-192, and Ser-208.

Belongs to the DapA family. NanA subfamily. Homotetramer.

Its subcellular location is the cytoplasm. It catalyses the reaction aceneuramate = aldehydo-N-acetyl-D-mannosamine + pyruvate. The protein operates within amino-sugar metabolism; N-acetylneuraminate degradation; D-fructose 6-phosphate from N-acetylneuraminate: step 1/5. Catalyzes the reversible aldol cleavage of N-acetylneuraminic acid (sialic acid; Neu5Ac) to form pyruvate and N-acetylmannosamine (ManNAc) via a Schiff base intermediate. In Staphylococcus carnosus (strain TM300), this protein is N-acetylneuraminate lyase.